Reading from the N-terminus, the 343-residue chain is F-box/kelch-repeat protein At3g08810 (343 aa).

Over residues 1–15 the composition is skewed to basic residues; that stretch reads MSYPERKRKRSRWSK. The disordered stretch occupies residues 1–25; it reads MSYPERKRKRSRWSKPHSTQNPSPS. An F-box domain is found at 20-66; sequence QNPSPSLPDDVLLSIFARVSRLYYPTLSHVSESFRSLLASPELYKAR. 3 Kelch repeats span residues 134–181, 183–224, and 225–271; these read DIYN…VRDG, QGGH…LPDS, and YCVI…VILA.

The protein is F-box/kelch-repeat protein At3g08810 of Arabidopsis thaliana (Mouse-ear cress).